A 110-amino-acid chain; its full sequence is UPF0060 membrane protein SACE_5620 (110 aa).

Transmembrane regions (helical) follow at residues 8–28 (VVLF…VWQG), 34–54 (GLLW…VATF), 63–83 (ILAA…VVVD), and 89–109 (RWDL…MYAP).

The protein belongs to the UPF0060 family.

Its subcellular location is the cell membrane. The protein is UPF0060 membrane protein SACE_5620 of Saccharopolyspora erythraea (strain ATCC 11635 / DSM 40517 / JCM 4748 / NBRC 13426 / NCIMB 8594 / NRRL 2338).